The following is a 652-amino-acid chain: Acetyl-coenzyme A synthetase (652 aa).

CoA-binding positions include 191–194, T311, and N335; that span reads RAGR. ATP-binding positions include 387-389, 411-416, D500, and R515; these read GEP and DTWWQT. A CoA-binding site is contributed by S523. An ATP-binding site is contributed by R526. Residues V537, H539, and I542 each coordinate Mg(2+). R584 lines the CoA pocket. K609 carries the N6-acetyllysine modification.

This sequence belongs to the ATP-dependent AMP-binding enzyme family. Requires Mg(2+) as cofactor. Post-translationally, acetylated. Deacetylation by the SIR2-homolog deacetylase activates the enzyme.

The catalysed reaction is acetate + ATP + CoA = acetyl-CoA + AMP + diphosphate. Its function is as follows. Catalyzes the conversion of acetate into acetyl-CoA (AcCoA), an essential intermediate at the junction of anabolic and catabolic pathways. Acs undergoes a two-step reaction. In the first half reaction, Acs combines acetate with ATP to form acetyl-adenylate (AcAMP) intermediate. In the second half reaction, it can then transfer the acetyl group from AcAMP to the sulfhydryl group of CoA, forming the product AcCoA. Functionally, enables the cell to use acetate during aerobic growth to generate energy via the TCA cycle, and biosynthetic compounds via the glyoxylate shunt. Acetylates CheY, the response regulator involved in flagellar movement and chemotaxis. The sequence is that of Acetyl-coenzyme A synthetase from Citrobacter koseri (strain ATCC BAA-895 / CDC 4225-83 / SGSC4696).